The chain runs to 138 residues: Putative pre-16S rRNA nuclease (138 aa).

This sequence belongs to the YqgF nuclease family.

Its subcellular location is the cytoplasm. Its function is as follows. Could be a nuclease involved in processing of the 5'-end of pre-16S rRNA. This is Putative pre-16S rRNA nuclease from Mycoplasma genitalium (strain ATCC 33530 / DSM 19775 / NCTC 10195 / G37) (Mycoplasmoides genitalium).